The chain runs to 865 residues: MARALADLSVNLQVPRVVPSPDSDSDTDLEDPSPRRSAGGLHRSQVIHSGHFMVSSPHSDSLTRRRDQEGPVGLADFGPRSIDPTLTRLFECLSLAYSGKLVSPKWKNFKGLKLLCRDKIRLNNAIWRAWYIQYVQRRKSPVCGFVTPLQGSEADEHRKPEAVVLEGNYWKRRIEVVMREYHKWRIYYKKRLRKSSREGDFLAPKQVEGGWPPPERWCEQLFSSVVPVLLGGSEEEPGGRQLLDLDCFLSDISDTLFTMTQPSPSSLQLPSEDAYVGNADMIQPDLTPLQPSLDDFMEISDFFTNYRPPQTPTSSNFPEPPSFGPMADSLFSGGILGPEMPSPASASSSSGMTPLSGNTRLQARNSCSGPLDPSTFPSSEFLLPEDPKTKMPPAPVPTPLLPYPGPVKVHGLEPCTPSPFPTMAPPPALLSEEPLFSARFPFTTVPPAPGVSTLPAPTTFVPTPQPGPGPGPVPFPVDHLPHGYLEPVFGPHFTVPQGVQPRCKPCSPPPGGRKASPPTLTSATASPTATATARDNNPCLTQLLRAAKPEQVLEPSTVPSTLLRPPESPDAVPEIPRVRAFYPPIPAPTPPRPPPGPATLAPPRSLVVPKAERLSPPASSGSERRPSGDLNSIQPPGALSVHLSPPQTVLSRGRVDNNKMENRRITHISAEQKRRFNIKLGFDTLHGLVSTLSAQPSLKVSKATTLQKTAEYILMLQQERAAMQEEAQQLRDEIEELNAAINLCQQQLPATGVPITHQRFDQMRDMFDDYVRTRTLHNWKFWVFSILIRPLFESFNGMVSTASLHSLRQTSLAWLDQYCSLPALRPTVLNSLRQLSTSTSILTDPSLVPEQATRAVTEGPLGRPL.

Disordered stretches follow at residues 15-41 (PRVVPSPDSDSDTDLEDPSPRRSAGGL) and 53-77 (MVSSPHSDSLTRRRDQEGPVGLADF). Ser20, Ser23, and Ser25 each carry phosphoserine. Thr27 carries the post-translational modification Phosphothreonine. Ser196 bears the Phosphoserine mark. 2 disordered regions span residues 334-392 (GILG…TKMP) and 500-653 (QPRC…LSRG). Residues 351–368 (GMTPLSGNTRLQARNSCS) show a composition bias toward polar residues. A compositionally biased stretch (low complexity) spans 515–533 (ASPPTLTSATASPTATATA). At Ser568 the chain carries Phosphoserine; by AMPK. Over residues 583–597 (PPIPAPTPPRPPPGP) the composition is skewed to pro residues. A phosphoserine mark is found at Ser615, Ser627, and Ser644. A bHLH domain is found at 662-716 (NRRITHISAEQKRRFNIKLGFDTLHGLVSTLSAQPSLKVSKATTLQKTAEYILML). The interval 716-737 (LQQERAAMQEEAQQLRDEIEEL) is leucine-zipper.

Binds DNA as a heterodimer with TCFL4/MLX. Phosphorylation at Ser-568 by AMPK inactivates the DNA-binding activity.

The protein resides in the nucleus. Functionally, transcriptional repressor. Binds to the canonical and non-canonical E box sequences 5'-CACGTG-3'. The chain is Carbohydrate-responsive element-binding protein (Mlxipl) from Rattus norvegicus (Rat).